The following is a 592-amino-acid chain: Isocitrate dehydrogenase kinase/phosphatase 1 (592 aa).

ATP contacts are provided by residues Ala-337–Met-343 and Lys-358. Asp-393 is a catalytic residue.

Belongs to the AceK family.

Its subcellular location is the cytoplasm. The catalysed reaction is L-seryl-[isocitrate dehydrogenase] + ATP = O-phospho-L-seryl-[isocitrate dehydrogenase] + ADP + H(+). In terms of biological role, bifunctional enzyme which can phosphorylate or dephosphorylate isocitrate dehydrogenase (IDH) on a specific serine residue. This is a regulatory mechanism which enables bacteria to bypass the Krebs cycle via the glyoxylate shunt in response to the source of carbon. When bacteria are grown on glucose, IDH is fully active and unphosphorylated, but when grown on acetate or ethanol, the activity of IDH declines drastically concomitant with its phosphorylation. The sequence is that of Isocitrate dehydrogenase kinase/phosphatase 1 from Pseudoalteromonas translucida (strain TAC 125).